A 467-amino-acid chain; its full sequence is 3-isopropylmalate dehydratase large subunit (467 aa).

[4Fe-4S] cluster contacts are provided by C347, C407, and C410.

The protein belongs to the aconitase/IPM isomerase family. LeuC type 1 subfamily. Heterodimer of LeuC and LeuD. The cofactor is [4Fe-4S] cluster.

The catalysed reaction is (2R,3S)-3-isopropylmalate = (2S)-2-isopropylmalate. The protein operates within amino-acid biosynthesis; L-leucine biosynthesis; L-leucine from 3-methyl-2-oxobutanoate: step 2/4. In terms of biological role, catalyzes the isomerization between 2-isopropylmalate and 3-isopropylmalate, via the formation of 2-isopropylmaleate. In Nostoc sp. (strain PCC 7120 / SAG 25.82 / UTEX 2576), this protein is 3-isopropylmalate dehydratase large subunit.